The chain runs to 263 residues: Urease accessory protein UreH (263 aa).

Belongs to the UreD family. As to quaternary structure, ureH, UreF and UreG form a complex that acts as a GTP-hydrolysis-dependent molecular chaperone, activating the urease apoprotein by helping to assemble the nickel containing metallocenter of UreC. The UreE protein probably delivers the nickel.

It is found in the cytoplasm. Functionally, required for maturation of urease via the functional incorporation of the urease nickel metallocenter. The protein is Urease accessory protein UreH of Helicobacter acinonychis (strain Sheeba).